The primary structure comprises 791 residues: DNA repair and recombination protein RAD54-like (791 aa).

Over residues 1–20 the composition is skewed to polar residues; the sequence is MRRSLAPSQRIGQSTASRNA. The tract at residues 1 to 53 is disordered; sequence MRRSLAPSQRIGQSTASRNAFTPPLLQKKNKRACQKDLRLDTDADEDKERKRF. Residues 2-9 form a required for chromatin remodeling, strand pairing activities and coupling of ATPase activity region; sequence RRSLAPSQ. Phosphothreonine is present on Thr-22. The segment covering 34–53 has biased composition (basic and acidic residues); sequence CQKDLRLDTDADEDKERKRF. The region spanning 175–349 is the Helicase ATP-binding domain; it reads EGKKGDFNGC…FSLVNFVNPE (175 aa). 188 to 195 contributes to the ATP binding site; sequence DEMGLGKT. The short motif at 300–303 is the DEGH box element; the sequence is DEGH. The Helicase C-terminal domain occupies 506–663; sequence LLDFMLAAIR…NNESSEKHFT (158 aa). The interval 747-791 is disordered; that stretch reads KEVVESPESAAAEAESVEEESQPTQRKRPSPPLSDDSADEDFIGF. Over residues 782 to 791 the composition is skewed to acidic residues; that stretch reads DSADEDFIGF.

This sequence belongs to the SNF2/RAD54 helicase family. Interacts (via N-terminus) with spn-A/Rad51.

It is found in the nucleus. In terms of biological role, involved in mitotic DNA repair and meiotic recombination. Functions in the recombinational DNA repair pathway. Essential for interhomolog gene conversion (GC), but may have a less important role in intersister GC than spn-A/Rad51. In the presence of DNA, spn-A/Rad51 enhances the ATPase activity of okr/Rad54. This is DNA repair and recombination protein RAD54-like from Drosophila ananassae (Fruit fly).